The primary structure comprises 67 residues: Large ribosomal subunit protein uL29 (67 aa).

Belongs to the universal ribosomal protein uL29 family.

The polypeptide is Large ribosomal subunit protein uL29 (rpmC) (Thermus thermophilus).